A 152-amino-acid polypeptide reads, in one-letter code: Transcriptional repressor NrdR (152 aa).

The segment at 3–34 (CPYCNASDTKVIDSRLAAEGAQVRRRRSCNSC) is a zinc-finger region. The ATP-cone domain occupies 49–139 (PRIIKSSGKI…VYRDFQDIDA (91 aa)).

Belongs to the NrdR family. It depends on Zn(2+) as a cofactor.

Negatively regulates transcription of bacterial ribonucleotide reductase nrd genes and operons by binding to NrdR-boxes. The chain is Transcriptional repressor NrdR from Psychrobacter arcticus (strain DSM 17307 / VKM B-2377 / 273-4).